The following is a 142-amino-acid chain: Transcription antitermination protein NusB (142 aa).

This sequence belongs to the NusB family.

Functionally, involved in transcription antitermination. Required for transcription of ribosomal RNA (rRNA) genes. Binds specifically to the boxA antiterminator sequence of the ribosomal RNA (rrn) operons. This Persephonella marina (strain DSM 14350 / EX-H1) protein is Transcription antitermination protein NusB.